The sequence spans 927 residues: Protein unc-45 homolog B (927 aa).

TPR repeat units lie at residues 4-37 (PVQL…ITDK), 41-74 (AVLY…DASD), and 76-108 (KALF…EPKN). 3 ARM repeats span residues 167 to 206 (DAGA…GMCT), 209 to 248 (RARA…NIVD), and 746 to 785 (DKLR…NLAL).

Detected initially throughout the somites and the heart and gradually also expressed in the jaw, branchial arches and body wall muscles at later embryonic stages.

The protein localises to the cytoplasm. It localises to the myofibril. Its subcellular location is the sarcomere. The protein resides in the z line. It is found in the a band. The protein localises to the perinuclear region. It localises to the cytosol. Acts as a co-chaperone for HSP90 and is required for proper folding of the myosin motor domain. Plays a role in sarcomere formation during muscle cell development. Is necessary for normal early lens development. This chain is Protein unc-45 homolog B, found in Xenopus tropicalis (Western clawed frog).